The chain runs to 272 residues: Shikimate dehydrogenase (NADP(+)) (272 aa).

Shikimate is bound by residues Ser14 to Ser16 and Thr61. The active-site Proton acceptor is Lys65. NADP(+) is bound at residue Glu77. Residues Asn86 and Asp102 each contribute to the shikimate site. Residues Gly126–Ala130, Asn149–Arg154, and Met213 contribute to the NADP(+) site. Residue Tyr215 participates in shikimate binding. Gly237 lines the NADP(+) pocket.

This sequence belongs to the shikimate dehydrogenase family. As to quaternary structure, homodimer.

It carries out the reaction shikimate + NADP(+) = 3-dehydroshikimate + NADPH + H(+). Its pathway is metabolic intermediate biosynthesis; chorismate biosynthesis; chorismate from D-erythrose 4-phosphate and phosphoenolpyruvate: step 4/7. Involved in the biosynthesis of the chorismate, which leads to the biosynthesis of aromatic amino acids. Catalyzes the reversible NADPH linked reduction of 3-dehydroshikimate (DHSA) to yield shikimate (SA). The protein is Shikimate dehydrogenase (NADP(+)) of Escherichia coli O7:K1 (strain IAI39 / ExPEC).